Reading from the N-terminus, the 509-residue chain is O-acetyltransferase anaAT (509 aa).

The protein belongs to the fumigaclavine B O-acetyltransferase family. In terms of assembly, monomer.

The enzyme catalyses (2R,3S,11R)-aszonalenin + acetyl-CoA = (2R,3S,11R)-acetylaszonalenin + CoA. The protein operates within alkaloid biosynthesis. Functionally, O-acetyltransferase; part of the gene cluster that mediates the biosynthesis of the prenylated pyrroloindoline diketopiperazine acetylaszonalenin. The first step in the pathway is the formation of (R)-benzodiazepinedione by condensation of tryptophan and anthranilic acid catalyzed by the non-ribosomal peptide synthetase anaPS. The prenyltransferase anaPT then converts (R)-benzodiazepinedione to aszonalenin in the presence of dimethylallyl diphosphate (DMAPP) via C3-prenylation. The last step in the biosynthesis of acetylaszonalenin via acetylation of aszonalenin at position N1 catalyzed by anaAT. The sequence is that of O-acetyltransferase anaAT from Neosartorya fischeri (strain ATCC 1020 / DSM 3700 / CBS 544.65 / FGSC A1164 / JCM 1740 / NRRL 181 / WB 181) (Aspergillus fischerianus).